Here is a 1113-residue protein sequence, read N- to C-terminus: Myosin-binding protein 1 (1113 aa).

A helical transmembrane segment spans residues Leu-12–Ala-34. The disordered stretch occupies residues Glu-209–Pro-229. Residues Ser-888–Arg-986 enclose the GTD-binding domain.

Interacts with myosin XI-K, XI-I and XI-1. As to expression, expressed in leaf epidermal cells, roots and root hairs.

Its subcellular location is the endomembrane system. Its function is as follows. Membrane-anchored myosin receptors that define a distinct, plant-specific transport vesicle compartment. This Arabidopsis thaliana (Mouse-ear cress) protein is Myosin-binding protein 1.